Reading from the N-terminus, the 108-residue chain is MLKTTLLFFVTALCEIIGCFLPWLWLKRGASMWWLLPAAASLALFVWLLTLHPAASGRVYAAYGGVYVCTALLWLRVVDGVRLTVYDWCGALIALCGMLIIVVGWGRT.

Over 1–5 (MLKTT) the chain is Periplasmic. Residues 6 to 26 (LLFFVTALCEIIGCFLPWLWL) form a helical membrane-spanning segment. Residues 27 to 30 (KRGA) are Cytoplasmic-facing. The chain crosses the membrane as a helical span at residues 31-51 (SMWWLLPAAASLALFVWLLTL). The Periplasmic segment spans residues 52–60 (HPAASGRVY). Residues 61-81 (AAYGGVYVCTALLWLRVVDGV) traverse the membrane as a helical segment. The Cytoplasmic portion of the chain corresponds to 82–84 (RLT). Residues 85 to 105 (VYDWCGALIALCGMLIIVVGW) traverse the membrane as a helical segment. The Periplasmic portion of the chain corresponds to 106-108 (GRT).

It belongs to the UPF0060 family.

The protein resides in the cell inner membrane. The chain is UPF0060 membrane protein YnfA from Salmonella schwarzengrund (strain CVM19633).